The chain runs to 361 residues: Aromatic amino acid aminotransferase (361 aa).

Lysine 221 bears the N6-(pyridoxal phosphate)lysine mark.

The protein belongs to the class-II pyridoxal-phosphate-dependent aminotransferase family. Homodimer. Pyridoxal 5'-phosphate serves as cofactor.

The catalysed reaction is an aromatic L-alpha-amino acid + 2-oxoglutarate = an aromatic oxo-acid + L-glutamate. Aminotransferase that catalyzes the conversion of aromatic amino acids and 2-oxoglutarate into corresponding aromatic oxo acids and L-glutamate. This is Aromatic amino acid aminotransferase from Mycobacterium ulcerans (strain Agy99).